The chain runs to 362 residues: NAC domain-containing protein 5 (362 aa).

An NAC domain is found at asparagine 3 to lysine 151. Residues isoleucine 107–phenylalanine 157 mediate DNA binding. Residues aspartate 240–aspartate 266 are disordered.

It is found in the nucleus. The polypeptide is NAC domain-containing protein 5 (NAC005) (Arabidopsis thaliana (Mouse-ear cress)).